A 102-amino-acid chain; its full sequence is Defensin (102 aa).

Positions 1–25 are cleaved as a signal peptide; it reads MKCATIVCTIAVVLAATLLNGSVQA. The propeptide occupies 26-62; it reads APQEEAALSGGANLNTLLDELPEETHHAALENYRAKR. Cystine bridges form between cysteine 65–cysteine 92, cysteine 78–cysteine 98, and cysteine 82–cysteine 100.

This sequence belongs to the invertebrate defensin family. Type 1 subfamily.

The protein localises to the secreted. In terms of biological role, responsible for the anti Gram-positive activity of immune hemolymph. This is Defensin (Def1) from Anopheles gambiae (African malaria mosquito).